Consider the following 346-residue polypeptide: Fe(3+) ions import ATP-binding protein FbpC 1 (346 aa).

One can recognise an ABC transporter domain in the interval 5 to 235 (LEVDGVDKSF…PIDVPTAEFI (231 aa)). An ATP-binding site is contributed by 37–44 (GPSGCGKT).

It belongs to the ABC transporter superfamily. Fe(3+) ion importer (TC 3.A.1.10) family. In terms of assembly, the complex is composed of two ATP-binding proteins (FbpC), two transmembrane proteins (FbpB) and a solute-binding protein (FbpA).

It is found in the cell membrane. The enzyme catalyses Fe(3+)(out) + ATP + H2O = Fe(3+)(in) + ADP + phosphate + H(+). Functionally, part of the ABC transporter complex FbpABC involved in Fe(3+) ions import. Responsible for energy coupling to the transport system. This Rhodococcus jostii (strain RHA1) protein is Fe(3+) ions import ATP-binding protein FbpC 1.